The sequence spans 254 residues: 3-deoxy-manno-octulosonate cytidylyltransferase (254 aa).

It belongs to the KdsB family.

The protein resides in the cytoplasm. It catalyses the reaction 3-deoxy-alpha-D-manno-oct-2-ulosonate + CTP = CMP-3-deoxy-beta-D-manno-octulosonate + diphosphate. It functions in the pathway nucleotide-sugar biosynthesis; CMP-3-deoxy-D-manno-octulosonate biosynthesis; CMP-3-deoxy-D-manno-octulosonate from 3-deoxy-D-manno-octulosonate and CTP: step 1/1. The protein operates within bacterial outer membrane biogenesis; lipopolysaccharide biosynthesis. Functionally, activates KDO (a required 8-carbon sugar) for incorporation into bacterial lipopolysaccharide in Gram-negative bacteria. The sequence is that of 3-deoxy-manno-octulosonate cytidylyltransferase from Bordetella petrii (strain ATCC BAA-461 / DSM 12804 / CCUG 43448).